The primary structure comprises 186 residues: UPF0301 protein Nmul_A2478 (186 aa).

This sequence belongs to the UPF0301 (AlgH) family.

This chain is UPF0301 protein Nmul_A2478, found in Nitrosospira multiformis (strain ATCC 25196 / NCIMB 11849 / C 71).